The chain runs to 1064 residues: Bifunctional cytochrome P450/NADPH--P450 reductase ascE (1064 aa).

The interval 1-484 is cytochrome P450; sequence MTELIPGPKG…LHGGAKKGSK (484 aa). Position 411 (Cys-411) interacts with heme. The interval 485–1064 is NADPH-P-450 reductase; it reads IDGPSSGASL…ANRYVTEIFA (580 aa). Residues 504 to 644 form the Flavodoxin-like domain; it reads MTILYGSDSG…DFERWQDDQL (141 aa). FMN is bound by residues 510-514 and 588-620; these read SDSGT and VYGC…KRIA. Residues 676 to 905 form the FAD-binding FR-type domain; sequence VDADEATVQS…KPALRLFHPP (230 aa).

In the N-terminal section; belongs to the cytochrome P450 family. The cofactor is FAD. Requires FMN as cofactor. It depends on heme as a cofactor.

It carries out the reaction ilicicolin A + NADPH + O2 + H(+) = ilicicolin A epoxide + NADP(+) + H2O. Its pathway is secondary metabolite biosynthesis; terpenoid biosynthesis. Its function is as follows. Bifunctional cytochrome P450/NADPH--P450 reductase; part of the asc-1 gene cluster that mediates the biosynthesis both ascochlorin and ascofuranone, a strong inhibitor of cyanide-insensitive alternative oxidases and a promising drug candidate against African trypanosomiasis. The first step in the pathway is performed by the non-reducing polyketide synthase ascC that produces orsellinic acid by condensing acetyl-CoA with 3 malonyl-CoA units. Orsellinic acid is then prenylated by the prenyltransferase ascA to yield ilicicolinic acid B. Ilicicolinic acid B is further reduced to ilicicolin B by the reductase ascB. The halogenase ascD then chlorinates ilicicolin B to produce ilicicolin A which is converted to ilicicolin A epoxide by the cytochrome P450 monooxygenase ascE that catalyzes stereoselective epoxidation of the terminal double bond of the prenyl group. Ilicicolin A epoxide is the last common precursor for the biosynthesis of ascofuranone and ascochlorin. The terpene cyclase ascF produces a monocyclic terpene, and the cyclization reaction is proposed to be initiated by protonation of the terminal epoxide of ilicicolin A epoxide to generate a monocyclic tertiarycation, which is followed by a series of hydride and methyl shifts with abstraction of proton, leading to the formation of the (14S,15R,19R)-trimethylcyclohexanone ring structure of ilicicolin C, which is finally reduced to ascochlorin by the dehydrogenase ascG. On the other hand, ilicicolin A epoxide is hydroxylated by the cytochrome P450 monooxygenase ascH, and the resultant product is cyclized by the terpene cyclase ascI to ascofuranol via protonation-initiated epoxide ring opening, which facilitates the 6-endo-tet cyclization to form the tetrahy-drofuran ring. Finally, ascofuranol is oxidized into ascofuranone by ascJ. The protein is Bifunctional cytochrome P450/NADPH--P450 reductase ascE of Acremonium egyptiacum (Oospora egyptiaca).